The following is a 231-amino-acid chain: Large ribosomal subunit protein uL1 (231 aa).

Belongs to the universal ribosomal protein uL1 family. Part of the 50S ribosomal subunit.

In terms of biological role, binds directly to 23S rRNA. The L1 stalk is quite mobile in the ribosome, and is involved in E site tRNA release. Protein L1 is also a translational repressor protein, it controls the translation of the L11 operon by binding to its mRNA. The chain is Large ribosomal subunit protein uL1 from Thiobacillus denitrificans (strain ATCC 25259 / T1).